A 246-amino-acid chain; its full sequence is MSLTITSSVTHPELKDLSTVRNEQKELNISPVHDVNVTKATATFGMGCFWGAESLYGATRGVLRTTVGYAGGSSDLPTYRKMGDHTEVLEIDYDPTVISFKELLDLFWNNHEYGLTTPIKRQYASLILYHDEEQKQVAHASKLEEQERRAPEIITTEIASKENFYPAEAYHQKYRLQGHKDLASSLNLSPKLLQTSYVATKLNGYLAGVGGIEQFKAEAETMGLTPTQRQYCYYHVEQNEGQGLYC.

The active-site Cysteine sulfenic acid (-SOH) intermediate is Cys-48. Cys-48 and Cys-246 are oxidised to a cystine.

Post-translationally, conjugated to URM1, a ubiquitin-like protein.

It catalyses the reaction L-methionyl-[protein] + [thioredoxin]-disulfide + H2O = L-methionyl-(S)-S-oxide-[protein] + [thioredoxin]-dithiol. The enzyme catalyses [thioredoxin]-disulfide + L-methionine + H2O = L-methionine (S)-S-oxide + [thioredoxin]-dithiol. Functionally, has an important function as a repair enzyme for proteins that have been inactivated by oxidation. Catalyzes the reduction of methionine sulfoxide in proteins to methionine. Does not catalyze the reverse reaction involving the oxidation of methionine residues. The chain is Peptide methionine sulfoxide reductase from Drosophila melanogaster (Fruit fly).